The primary structure comprises 493 residues: Cytochrome P450 2E1 (493 aa).

A substrate-binding site is contributed by 298–303 (FAGTET). Heme is bound at residue cysteine 437.

The protein belongs to the cytochrome P450 family. Interacts with chaperones HSP70 and HSP90; this interaction is required for initial targeting to mitochondria. The cofactor is heme.

The protein localises to the endoplasmic reticulum membrane. It localises to the microsome membrane. The protein resides in the mitochondrion inner membrane. It catalyses the reaction an organic molecule + reduced [NADPH--hemoprotein reductase] + O2 = an alcohol + oxidized [NADPH--hemoprotein reductase] + H2O + H(+). The catalysed reaction is (5Z,8Z,11Z)-eicosatrienoate + reduced [NADPH--hemoprotein reductase] + O2 = 19-hydroxy-(5Z,8Z,11Z)-eicosatrienoate + oxidized [NADPH--hemoprotein reductase] + H2O + H(+). It carries out the reaction (5Z,8Z,11Z,14Z,17Z)-eicosapentaenoate + reduced [NADPH--hemoprotein reductase] + O2 = 19-hydroxy-(5Z,8Z,11Z,14Z,17Z)-eicosapentaenoate + oxidized [NADPH--hemoprotein reductase] + H2O + H(+). The enzyme catalyses (4Z,7Z,10Z,13Z,16Z,19Z)-docosahexaenoate + reduced [NADPH--hemoprotein reductase] + O2 = 21-hydroxy-(4Z,7Z,10Z,13Z,16Z,19Z)-docosahexaenoate + oxidized [NADPH--hemoprotein reductase] + H2O + H(+). It catalyses the reaction dodecanoate + reduced [NADPH--hemoprotein reductase] + O2 = 11-hydroxydodecanoate + oxidized [NADPH--hemoprotein reductase] + H2O + H(+). The catalysed reaction is tetradecanoate + reduced [NADPH--hemoprotein reductase] + O2 = 13-hydroxytetradecanoate + oxidized [NADPH--hemoprotein reductase] + H2O + H(+). It carries out the reaction 4-nitrophenol + NADPH + O2 + H(+) = 4-nitrocatechol + NADP(+) + H2O. The protein operates within lipid metabolism; fatty acid metabolism. The omega-1 hydroxylase activity is stimulated by cytochrome b5. Its function is as follows. A cytochrome P450 monooxygenase involved in the metabolism of fatty acids. Mechanistically, uses molecular oxygen inserting one oxygen atom into a substrate, and reducing the second into a water molecule, with two electrons provided by NADPH via cytochrome P450 reductase (NADPH--hemoprotein reductase). Catalyzes the hydroxylation of carbon-hydrogen bonds. Hydroxylates fatty acids specifically at the omega-1 position displaying the highest catalytic activity for saturated fatty acids. May be involved in the oxidative metabolism of xenobiotics. The sequence is that of Cytochrome P450 2E1 (CYP2E1) from Oryctolagus cuniculus (Rabbit).